The chain runs to 469 residues: Extracellular endo-alpha-(1-&gt;5)-L-arabinanase 2 (469 aa).

Positions Met-1 to Ala-26 are cleaved as a signal peptide. Asp-38 (proton acceptor) is an active-site residue. Substrate contacts are provided by residues Asp-38, Asp-122, Asn-168 to Asp-171, Ser-188 to Ser-190, and His-220 to Glu-224. Residue Glu-224 is the Proton donor of the active site. His-318 contacts Ca(2+).

Belongs to the glycosyl hydrolase 43 family. In terms of assembly, homodimer. Requires Ca(2+) as cofactor.

Its subcellular location is the secreted. The catalysed reaction is Endohydrolysis of (1-&gt;5)-alpha-arabinofuranosidic linkages in (1-&gt;5)-arabinans.. It functions in the pathway glycan metabolism; L-arabinan degradation. Functionally, involved in the degradation of arabinan and is a key enzyme in the complete degradation of the plant cell wall. Catalyzes the internal cleavage of alpha-(1-&gt;5)-L-arabinofuranosyl residues of the alpha-1,5-L-arabinan to produce arabino-oligosaccharides and L-arabinose. It is also active toward linear branched sugar beet arabinan, and pectin from apple. In Bacillus subtilis (strain 168), this protein is Extracellular endo-alpha-(1-&gt;5)-L-arabinanase 2 (abn2).